Reading from the N-terminus, the 240-residue chain is uncharacterized protein (240 aa).

A signal peptide spans 1–17; that stretch reads MRMAFMLLALLFSFRNA.

This is an uncharacterized protein from Treponema pallidum (strain Nichols).